The sequence spans 641 residues: Fibrinogen alpha-2 chain (641 aa).

A signal peptide spans 1-23 (MTLRGVSMVLTWCLLVSKAWSSG). The stretch at 107-226 (SVSDVSNQVV…IVHESFSVER (120 aa)) forms a coiled coil. The segment at 228–327 (DARSLHPYSG…QKTEELSFKK (100 aa)) is disordered. N-linked (GlcNAc...) asparagine glycosylation occurs at N271. Over residues 279–289 (VDERSKVEKDV) the composition is skewed to basic and acidic residues. Over residues 293 to 317 (STSSVSSSSSSSSSSSSTSSTISST) the composition is skewed to low complexity. One can recognise a Fibrinogen C-terminal domain in the interval 395–636 (RTNLSEYIDC…RTAVRFRRVQ (242 aa)). N-linked (GlcNAc...) asparagine glycosylation occurs at N397. A disulfide bond links C404 and C435. A glycan (N-linked (GlcNAc...) asparagine) is linked at N458. C571 and C584 are oxidised to a cystine.

Heterohexamer; disulfide linked. Contains 2 sets of 3 non-identical chains (alpha, beta and gamma). The 2 heterotrimers are in head to head conformation with the N-termini in a small central domain. Post-translationally, conversion of fibrinogen to fibrin is triggered by thrombin, which cleaves fibrinopeptides A and B from alpha and beta chains, and thus exposes the N-terminal polymerization sites responsible for the formation of the soft clot. The soft clot is converted into the hard clot by factor XIIIA which catalyzes the epsilon-(gamma-glutamyl)lysine cross-linking between gamma chains (stronger) and between alpha chains (weaker) of different monomers. Forms F13A-mediated cross-links between a glutamine and the epsilon-amino group of a lysine residue, forming fibronectin-fibrinogen heteropolymers.

Its subcellular location is the secreted. In terms of biological role, fibrinogen has a double function: yielding monomers that polymerize into fibrin and acting as a cofactor in platelet aggregation. The chain is Fibrinogen alpha-2 chain from Petromyzon marinus (Sea lamprey).